Reading from the N-terminus, the 81-residue chain is Photosystem I iron-sulfur center (81 aa).

4Fe-4S ferredoxin-type domains lie at 2–31 (SHSV…MIPW) and 39–68 (IASA…VRVY). Residues Cys-11, Cys-14, Cys-17, Cys-21, Cys-48, Cys-51, Cys-54, and Cys-58 each contribute to the [4Fe-4S] cluster site.

The eukaryotic PSI reaction center is composed of at least 11 subunits. It depends on [4Fe-4S] cluster as a cofactor.

It is found in the plastid thylakoid membrane. The catalysed reaction is reduced [plastocyanin] + hnu + oxidized [2Fe-2S]-[ferredoxin] = oxidized [plastocyanin] + reduced [2Fe-2S]-[ferredoxin]. Its function is as follows. Apoprotein for the two 4Fe-4S centers FA and FB of photosystem I (PSI); essential for photochemical activity. FB is the terminal electron acceptor of PSI, donating electrons to ferredoxin. The C-terminus interacts with PsaA/B/D and helps assemble the protein into the PSI complex. Required for binding of PsaD and PsaE to PSI. PSI is a plastocyanin-ferredoxin oxidoreductase, converting photonic excitation into a charge separation, which transfers an electron from the donor P700 chlorophyll pair to the spectroscopically characterized acceptors A0, A1, FX, FA and FB in turn. The polypeptide is Photosystem I iron-sulfur center (Cuscuta reflexa (Southern Asian dodder)).